Reading from the N-terminus, the 111-residue chain is Gastrula zinc finger protein XlCGF32.1 (111 aa).

C2H2-type zinc fingers lie at residues 6–28 (FDCT…FLCH), 34–56 (FVCV…LRIH), 62–84 (SVCP…MRIH), and 89–111 (FMCS…LQIH).

It belongs to the krueppel C2H2-type zinc-finger protein family.

It is found in the nucleus. Functionally, may be involved in transcriptional regulation. The chain is Gastrula zinc finger protein XlCGF32.1 from Xenopus laevis (African clawed frog).